The sequence spans 164 residues: UPF0178 protein RPD_2254 (164 aa).

The protein belongs to the UPF0178 family.

The sequence is that of UPF0178 protein RPD_2254 from Rhodopseudomonas palustris (strain BisB5).